Consider the following 337-residue polypeptide: Ornithine carbamoyltransferase (337 aa).

Carbamoyl phosphate contacts are provided by residues Ser-57 to Thr-60, Gln-84, Arg-108, and His-135 to Gln-138. L-ornithine contacts are provided by residues Asn-167, Asp-231, and Ser-235–Met-236. Carbamoyl phosphate is bound by residues Cys-272–Leu-273 and Arg-317.

It belongs to the aspartate/ornithine carbamoyltransferase superfamily. OTCase family.

The protein localises to the cytoplasm. The enzyme catalyses carbamoyl phosphate + L-ornithine = L-citrulline + phosphate + H(+). It participates in amino-acid degradation; L-arginine degradation via ADI pathway; carbamoyl phosphate from L-arginine: step 2/2. Its function is as follows. Reversibly catalyzes the transfer of the carbamoyl group from carbamoyl phosphate (CP) to the N(epsilon) atom of ornithine (ORN) to produce L-citrulline. The sequence is that of Ornithine carbamoyltransferase from Streptococcus equi subsp. zooepidemicus (strain MGCS10565).